Here is a 179-residue protein sequence, read N- to C-terminus: Cytochrome c-type biogenesis protein CcmE (179 aa).

At 1–8 (MTPRRKSR) the chain is on the cytoplasmic side. The helical; Signal-anchor for type II membrane protein transmembrane segment at 9 to 29 (MTVILFVLLGISIASALVLYA) threads the bilayer. Topologically, residues 30-179 (LRQNIDLFYT…QKTSMQEGQK (150 aa)) are periplasmic. Residues His-131 and Tyr-135 each coordinate heme. The disordered stretch occupies residues 151 to 179 (MGVADLKGESERDRQEKAYQKTSMQEGQK). The span at 156–169 (LKGESERDRQEKAY) shows a compositional bias: basic and acidic residues. Residues 170 to 179 (QKTSMQEGQK) are compositionally biased toward polar residues.

Belongs to the CcmE/CycJ family.

It is found in the cell inner membrane. In terms of biological role, heme chaperone required for the biogenesis of c-type cytochromes. Transiently binds heme delivered by CcmC and transfers the heme to apo-cytochromes in a process facilitated by CcmF and CcmH. The chain is Cytochrome c-type biogenesis protein CcmE from Pasteurella multocida (strain Pm70).